Here is a 626-residue protein sequence, read N- to C-terminus: Fructose-1,6-bisphosphatase class 3 (626 aa).

It belongs to the FBPase class 3 family. It depends on Mn(2+) as a cofactor.

It carries out the reaction beta-D-fructose 1,6-bisphosphate + H2O = beta-D-fructose 6-phosphate + phosphate. Its pathway is carbohydrate biosynthesis; gluconeogenesis. The polypeptide is Fructose-1,6-bisphosphatase class 3 (Enterococcus faecalis (strain ATCC 700802 / V583)).